We begin with the raw amino-acid sequence, 1255 residues long: Cilia- and flagella-associated protein 337 B (1255 aa).

In terms of domain architecture, EF-hand spans 87–122 (KLVRCLTNLFEEIDLNGNGILEWDEFTNYVIEKATV). Ca(2+) contacts are provided by aspartate 100, asparagine 102, asparagine 104, and glutamate 111. WD repeat units lie at residues 228–269 (DLKT…WVLA), 282–322 (EFKN…KELE), 326–365 (AHTEVIMDMITMPKLQFLASGALDGLLILWDTINNKKKRV), 368–407 (EHTRGITSLSFNEALILLFSAGFDHEVCVWNPYIDNLIYK), 410–449 (GHSSPLLGVKVIEGTSQVITLDSDGNVRVTDIKKFSNVQC), 496–536 (VDDY…KIFS), 538–577 (VTQGEITCFTLDSLKKRMLIGDSMGQIGIYNTYNGAMIKA), 580–624 (KHSA…RTLE), 625–664 (LKDVMITSLGFDPITKMIIVATNTGITSFYESDTGKQNGS), 669–708 (TQYEEITSLNLIKNLPYIITTTTNGKINFIALPPLLFKFQ), 769–808 (QQNLSISNCIYCDQTKCLFLSDDKGFIKCFDISQILTILE), and 844–883 (AHYEMIKSLEYIQEENLLITTAYDKKVKLWDSKTGNLIDQ). Disordered regions lie at residues 941–988 (IKSL…NFNP) and 1140–1160 (QQQVQNQQTEPSSNRSHQQPG). Residues 953 to 969 (TQESSTQEQEAAQQPQQ) show a composition bias toward low complexity. Residues 1148–1160 (TEPSSNRSHQQPG) are compositionally biased toward polar residues.

The protein belongs to the CFAP337 family. Associates with components of the nexin-dynein regulatory complex (N-DRC) and the CFAP184:CFAP263 complex.

The protein localises to the cell projection. Its subcellular location is the cilium. Functionally, associates with components of the nexin-dynein regulatory complex (N-DRC), a key regulator of ciliary/flagellar motility, and might act as an inner dynein arm (IDA) hub or linkage. The sequence is that of Cilia- and flagella-associated protein 337 B from Tetrahymena thermophila (strain SB210).